Here is a 403-residue protein sequence, read N- to C-terminus: Keratin, type I cytoskeletal 19 (403 aa).

The segment at 1–82 (MTSYSYRQTS…AVSDGLLSGN (82 aa)) is head. The residue at position 7 (Arg-7) is an Omega-N-methylarginine. Ser-14 and Ser-22 each carry phosphoserine. At Arg-24 the chain carries Asymmetric dimethylarginine; alternate. An Omega-N-methylarginine; alternate modification is found at Arg-24. Position 27 is a phosphoserine (Ser-27). Arg-32 is modified (omega-N-methylarginine). Ser-35 and Ser-40 each carry phosphoserine. 2 positions are modified to omega-N-methylarginine: Arg-43 and Arg-51. The residue at position 57 (Ser-57) is a Phosphoserine. At Arg-64 the chain carries Omega-N-methylarginine. Phosphoserine occurs at positions 67 and 75. Residues 83–118 (EKITMQNLNDRLASYLDKVRALEQANGELEVKIRDW) are coil 1A. Residues 83–394 (EKITMQNLND…SLLEGQEAHY (312 aa)) enclose the IF rod domain. The segment at 119-136 (YQKQGPGPSRDYNHYFKT) is linker 1. Positions 137–228 (IEDLRDKILG…KNHEEEITAL (92 aa)) are coil 1B. Positions 229–251 (RSQVGGQVSVEVDSTPGVDLAKI) are linker 12. Residues 247–393 (DLAKILSEMR…RSLLEGQEAH (147 aa)) are necessary for interaction with PNN. The coil 2 stretch occupies residues 252-390 (LSEMRSQYEI…ATYRSLLEGQ (139 aa)). Phosphothreonine is present on Thr-326. Residues 391-403 (EAHYNNLPTPKAI) form a rod-like helical tail region. Tyr-394 is subject to Phosphotyrosine.

The protein belongs to the intermediate filament family. In terms of assembly, heterotetramer of two type I and two type II keratins. Interacts with PNN and the actin-binding domain of DMD.

In terms of biological role, involved in the organization of myofibers. Together with KRT8, helps to link the contractile apparatus to dystrophin at the costameres of striated muscle. In Mus musculus (Mouse), this protein is Keratin, type I cytoskeletal 19 (Krt19).